The sequence spans 495 residues: Glutamyl-tRNA(Gln) amidotransferase subunit A (495 aa).

Catalysis depends on charge relay system residues Lys75 and Ser150. Ser174 (acyl-ester intermediate) is an active-site residue.

This sequence belongs to the amidase family. GatA subfamily. As to quaternary structure, heterotrimer of A, B and C subunits.

It carries out the reaction L-glutamyl-tRNA(Gln) + L-glutamine + ATP + H2O = L-glutaminyl-tRNA(Gln) + L-glutamate + ADP + phosphate + H(+). In terms of biological role, allows the formation of correctly charged Gln-tRNA(Gln) through the transamidation of misacylated Glu-tRNA(Gln) in organisms which lack glutaminyl-tRNA synthetase. The reaction takes place in the presence of glutamine and ATP through an activated gamma-phospho-Glu-tRNA(Gln). This is Glutamyl-tRNA(Gln) amidotransferase subunit A from Paraburkholderia phytofirmans (strain DSM 17436 / LMG 22146 / PsJN) (Burkholderia phytofirmans).